A 1434-amino-acid polypeptide reads, in one-letter code: DNA-directed RNA polymerase subunit beta (1434 aa).

This sequence belongs to the RNA polymerase beta chain family. In terms of assembly, the RNAP catalytic core consists of 2 alpha, 1 beta, 1 beta' and 1 omega subunit. When a sigma factor is associated with the core the holoenzyme is formed, which can initiate transcription.

The catalysed reaction is RNA(n) + a ribonucleoside 5'-triphosphate = RNA(n+1) + diphosphate. DNA-dependent RNA polymerase catalyzes the transcription of DNA into RNA using the four ribonucleoside triphosphates as substrates. The chain is DNA-directed RNA polymerase subunit beta from Ureaplasma parvum serovar 3 (strain ATCC 27815 / 27 / NCTC 11736).